The following is a 143-amino-acid chain: Putative aryl-alcohol dehydrogenase AAD15 (143 aa).

This sequence belongs to the aldo/keto reductase family. Aldo/keto reductase 2 subfamily.

In terms of biological role, putative aryl-alcohol dehydrogenase. This Saccharomyces cerevisiae (strain ATCC 204508 / S288c) (Baker's yeast) protein is Putative aryl-alcohol dehydrogenase AAD15 (AAD15).